The sequence spans 370 residues: DNA replication and repair protein RecF (370 aa).

30–37 (GENAQGKT) provides a ligand contact to ATP.

It belongs to the RecF family.

The protein resides in the cytoplasm. In terms of biological role, the RecF protein is involved in DNA metabolism; it is required for DNA replication and normal SOS inducibility. RecF binds preferentially to single-stranded, linear DNA. It also seems to bind ATP. This chain is DNA replication and repair protein RecF, found in Bacillus pumilus (strain SAFR-032).